Here is a 434-residue protein sequence, read N- to C-terminus: Alpha-enolase (434 aa).

Serine 2 carries the N-acetylserine modification. Lysine 5 is subject to N6-acetyllysine. Serine 40 lines the Mg(2+) pocket. Tyrosine 44 carries the post-translational modification Phosphotyrosine. Position 60 is an N6-acetyllysine; alternate (lysine 60). Residue lysine 60 is modified to N6-succinyllysine; alternate. Lysine 64 and lysine 71 each carry N6-acetyllysine. Lysine 89 carries the N6-acetyllysine; alternate modification. The residue at position 89 (lysine 89) is an N6-succinyllysine; alternate. Lysine 92 and lysine 126 each carry N6-acetyllysine. Substrate-binding residues include histidine 158 and glutamate 167. Residues lysine 193 and lysine 199 each carry the N6-acetyllysine modification. At lysine 202 the chain carries N6-acetyllysine; alternate. Lysine 202 is covalently cross-linked (Glycyl lysine isopeptide (Lys-Gly) (interchain with G-Cter in SUMO2); alternate). Residue glutamate 210 is the Proton donor of the active site. 2 positions are modified to N6-acetyllysine; alternate: lysine 228 and lysine 233. Lysine 228 carries the N6-succinyllysine; alternate modification. Lysine 228 is modified (N6-(2-hydroxyisobutyryl)lysine; alternate). An N6-malonyllysine; alternate modification is found at lysine 233. Aspartate 245 is a Mg(2+) binding site. Serine 254 carries the phosphoserine modification. Position 256 is an N6-acetyllysine (lysine 256). Serine 263 bears the Phosphoserine mark. N6-acetyllysine; alternate is present on lysine 281. Lysine 281 bears the N6-(2-hydroxyisobutyryl)lysine; alternate mark. Position 287 is a phosphotyrosine (tyrosine 287). At serine 291 the chain carries Phosphoserine. Mg(2+) contacts are provided by glutamate 293 and aspartate 318. Glutamate 293 and aspartate 318 together coordinate substrate. 2 positions are modified to N6-acetyllysine: lysine 335 and lysine 343. The active-site Proton acceptor is the lysine 343. Residues 370–373 (SHRS) and lysine 394 contribute to the substrate site. The required for interaction with PLG stretch occupies residues 405 to 434 (AKYNQILRIEEELGSKAKFAGRSFRNPLAK). Lysine 406 bears the N6-acetyllysine mark. Lysine 420 bears the N6-acetyllysine; alternate mark. At lysine 420 the chain carries N6-succinyllysine; alternate. Residue lysine 420 is modified to N6-malonyllysine; alternate.

This sequence belongs to the enolase family. Mammalian enolase is composed of 3 isozyme subunits, alpha, beta and gamma, which can form homodimers or heterodimers which are cell-type and development-specific. ENO1 interacts with PLG in the neuronal plasma membrane and promotes its activation. The C-terminal lysine is required for this binding. Interacts with ENO4 and PGAM2. Interacts with CMTM6. It depends on Mg(2+) as a cofactor. In terms of processing, ISGylated. Lysine 2-hydroxyisobutyrylation (Khib) by p300/EP300 activates the phosphopyruvate hydratase activity. As to expression, the alpha/alpha homodimer is expressed in embryo and in most adult tissues. The alpha/beta heterodimer and the beta/beta homodimer are found in striated muscle, and the alpha/gamma heterodimer and the gamma/gamma homodimer in neurons.

It is found in the cytoplasm. The protein localises to the cell membrane. The enzyme catalyses (2R)-2-phosphoglycerate = phosphoenolpyruvate + H2O. The protein operates within carbohydrate degradation; glycolysis; pyruvate from D-glyceraldehyde 3-phosphate: step 4/5. Functionally, glycolytic enzyme the catalyzes the conversion of 2-phosphoglycerate to phosphoenolpyruvate. In addition to glycolysis, involved in various processes such as growth control, hypoxia tolerance and allergic responses. May also function in the intravascular and pericellular fibrinolytic system due to its ability to serve as a receptor and activator of plasminogen on the cell surface of several cell-types such as leukocytes and neurons. Stimulates immunoglobulin production. This is Alpha-enolase (ENO1) from Bos taurus (Bovine).